The sequence spans 101 residues: ATP-dependent Clp protease adapter protein ClpS (101 aa).

The protein belongs to the ClpS family. Binds to the N-terminal domain of the chaperone ClpA.

Its function is as follows. Involved in the modulation of the specificity of the ClpAP-mediated ATP-dependent protein degradation. This Corynebacterium jeikeium (strain K411) protein is ATP-dependent Clp protease adapter protein ClpS.